The primary structure comprises 791 residues: uncharacterized protein (791 aa).

Residues 10–30 (LLTITIGAVAVSSILLGGIFY) traverse the membrane as a helical segment. Residues 56 to 76 (NLDYQKARPSIKDNNLKEIPK) show a composition bias toward basic and acidic residues. The tract at residues 56 to 175 (NLDYQKARPS…PQPQQIPNQS (120 aa)) is disordered. Over residues 77-97 (PKPQPKPEPQPTPFPDPIPTP) the composition is skewed to pro residues. Over residues 98–124 (PKKEELKKPEIKPEEPKKPEIKPEPIP) the composition is skewed to basic and acidic residues. Positions 125–139 (KPKPQPIPQPTPPVE) are enriched in pro residues.

The protein to U.parvum UU044.

It is found in the membrane. This is an uncharacterized protein from Ureaplasma parvum serovar 3 (strain ATCC 700970).